Consider the following 226-residue polypeptide: Enolase-phosphatase E1 (226 aa).

Belongs to the HAD-like hydrolase superfamily. MasA/MtnC family. As to quaternary structure, monomer. Requires Mg(2+) as cofactor.

It carries out the reaction 5-methylsulfanyl-2,3-dioxopentyl phosphate + H2O = 1,2-dihydroxy-5-(methylsulfanyl)pent-1-en-3-one + phosphate. It participates in amino-acid biosynthesis; L-methionine biosynthesis via salvage pathway; L-methionine from S-methyl-5-thio-alpha-D-ribose 1-phosphate: step 3/6. Its pathway is amino-acid biosynthesis; L-methionine biosynthesis via salvage pathway; L-methionine from S-methyl-5-thio-alpha-D-ribose 1-phosphate: step 4/6. Bifunctional enzyme that catalyzes the enolization of 2,3-diketo-5-methylthiopentyl-1-phosphate (DK-MTP-1-P) into the intermediate 2-hydroxy-3-keto-5-methylthiopentenyl-1-phosphate (HK-MTPenyl-1-P), which is then dephosphorylated to form the acireductone 1,2-dihydroxy-3-keto-5-methylthiopentene (DHK-MTPene). The chain is Enolase-phosphatase E1 from Shewanella sp. (strain MR-4).